The primary structure comprises 328 residues: Olfactory receptor 2AJ1 (328 aa).

Residues 1–25 (MGHQNHTFSSDFILLGLFSSSPTSV) are Extracellular-facing. Asparagine 5 carries N-linked (GlcNAc...) asparagine glycosylation. The chain crosses the membrane as a helical span at residues 26–49 (VFFLVLFVIFIMSVTENTLMILLI). At 50-57 (RSDSRLHT) the chain is on the cytoplasmic side. A helical membrane pass occupies residues 58-79 (PMYFLLSHLSLMDILHVSNIVP). Residues 80 to 100 (KMVTNFLSGSRTISFAGCGFQ) lie on the Extracellular side of the membrane. A disulfide bridge connects residues cysteine 97 and cysteine 189. Residues 101 to 120 (VFLSLTLLGGECLLLAAMSC) form a helical membrane-spanning segment. At 121 to 139 (DRYVAICHPLRYPILMKEY) the chain is on the cytoplasmic side. Residues 140–158 (ASALMAGGSWLIGVFNSTV) form a helical membrane-spanning segment. The Extracellular portion of the chain corresponds to 159–195 (HTAYALQFPFCGSRAIDHFFCEVPAMLKLSCADTTRY). A helical transmembrane segment spans residues 196-219 (ERGVCVSAVIFLLIPFSLISASYG). Residues 220-236 (QIILTVLQMKSSEARKK) are Cytoplasmic-facing. A helical membrane pass occupies residues 237-259 (SFSTCSFHMIVVTMYYGPFIFTY). Over 260–272 (MRPKSYHTPGQDK) the chain is Extracellular. The chain crosses the membrane as a helical span at residues 273-292 (FLAIFYTILTPTLNPFIYSF). Residues 293-328 (RNKDVLAVMKNMLKSNFLHKKMNRKIPECVFCLFLC) are Cytoplasmic-facing.

The protein belongs to the G-protein coupled receptor 1 family.

Its subcellular location is the cell membrane. Functionally, odorant receptor. The polypeptide is Olfactory receptor 2AJ1 (OR2AJ1) (Homo sapiens (Human)).